The sequence spans 204 residues: Holliday junction branch migration complex subunit RuvA (204 aa).

Residues 1 to 64 form a domain I region; that stretch reads MIGRLRGIIL…EDAQLLYGFN (64 aa). The tract at residues 65–142 is domain II; that stretch reads NKQERALFRE…KGLNGDLFNN (78 aa). The interval 143–155 is flexible linker; sequence TGDISLPTASPQT. Positions 156-204 are domain III; the sequence is SDADIEAEAASALVALGYKPQEASRLVSKIAKPGADCETLIRDALRAAL.

Belongs to the RuvA family. As to quaternary structure, homotetramer. Forms an RuvA(8)-RuvB(12)-Holliday junction (HJ) complex. HJ DNA is sandwiched between 2 RuvA tetramers; dsDNA enters through RuvA and exits via RuvB. An RuvB hexamer assembles on each DNA strand where it exits the tetramer. Each RuvB hexamer is contacted by two RuvA subunits (via domain III) on 2 adjacent RuvB subunits; this complex drives branch migration. In the full resolvosome a probable DNA-RuvA(4)-RuvB(12)-RuvC(2) complex forms which resolves the HJ.

The protein localises to the cytoplasm. The RuvA-RuvB-RuvC complex processes Holliday junction (HJ) DNA during genetic recombination and DNA repair, while the RuvA-RuvB complex plays an important role in the rescue of blocked DNA replication forks via replication fork reversal (RFR). RuvA specifically binds to HJ cruciform DNA, conferring on it an open structure. The RuvB hexamer acts as an ATP-dependent pump, pulling dsDNA into and through the RuvAB complex. HJ branch migration allows RuvC to scan DNA until it finds its consensus sequence, where it cleaves and resolves the cruciform DNA. The polypeptide is Holliday junction branch migration complex subunit RuvA (Yersinia pseudotuberculosis serotype O:1b (strain IP 31758)).